The primary structure comprises 195 residues: Imidazoleglycerol-phosphate dehydratase (195 aa).

Belongs to the imidazoleglycerol-phosphate dehydratase family.

It is found in the cytoplasm. It catalyses the reaction D-erythro-1-(imidazol-4-yl)glycerol 3-phosphate = 3-(imidazol-4-yl)-2-oxopropyl phosphate + H2O. The protein operates within amino-acid biosynthesis; L-histidine biosynthesis; L-histidine from 5-phospho-alpha-D-ribose 1-diphosphate: step 6/9. The chain is Imidazoleglycerol-phosphate dehydratase from Dinoroseobacter shibae (strain DSM 16493 / NCIMB 14021 / DFL 12).